The chain runs to 171 residues: NADP-reducing hydrogenase subunit HndA (171 aa).

[2Fe-2S] cluster is bound by residues Cys98, Cys103, Cys139, and Cys143.

Belongs to the complex I 24 kDa subunit family. In terms of assembly, heterotetramer composed of HndA, HndB, HndC and HndD subunits. HndA and HndB could form a heterodimeric intermediate in the electron transfer between the active site of hydrogenase subunit HndD and the NADP reduction site of the reducing subunit HndC. It depends on [2Fe-2S] cluster as a cofactor.

It carries out the reaction H2 + NADP(+) = NADPH + H(+). Inhibited by oxygen. Catalyzes the reduction of NADP in the presence of molecular H(2) to yield NADPH. This is NADP-reducing hydrogenase subunit HndA (hndA) from Solidesulfovibrio fructosivorans (Desulfovibrio fructosivorans).